The primary structure comprises 272 residues: Putative phosphoenolpyruvate synthase regulatory protein (272 aa).

152 to 159 (GVSRSGKT) serves as a coordination point for ADP.

This sequence belongs to the pyruvate, phosphate/water dikinase regulatory protein family. PSRP subfamily.

The catalysed reaction is [pyruvate, water dikinase] + ADP = [pyruvate, water dikinase]-phosphate + AMP + H(+). It catalyses the reaction [pyruvate, water dikinase]-phosphate + phosphate + H(+) = [pyruvate, water dikinase] + diphosphate. In terms of biological role, bifunctional serine/threonine kinase and phosphorylase involved in the regulation of the phosphoenolpyruvate synthase (PEPS) by catalyzing its phosphorylation/dephosphorylation. This chain is Putative phosphoenolpyruvate synthase regulatory protein, found in Methylibium petroleiphilum (strain ATCC BAA-1232 / LMG 22953 / PM1).